Reading from the N-terminus, the 272-residue chain is Thymidine phosphorylase (272 aa).

This sequence belongs to the thymidine/pyrimidine-nucleoside phosphorylase family. Homodimer.

The enzyme catalyses thymidine + phosphate = 2-deoxy-alpha-D-ribose 1-phosphate + thymine. The enzymes which catalyze the reversible phosphorolysis of pyrimidine nucleosides are involved in the degradation of these compounds and in their utilization as carbon and energy sources, or in the rescue of pyrimidine bases for nucleotide synthesis. This is Thymidine phosphorylase (deoA) from Metamycoplasma hominis (Mycoplasma hominis).